The chain runs to 463 residues: Adenosylhomocysteinase (463 aa).

3 residues coordinate substrate: T54, D128, and E189. T190–T192 provides a ligand contact to NAD(+). Residues K219 and D223 each coordinate substrate. Residues N224, G253 to G258, E276, N311, I332 to H334, and N377 each bind NAD(+).

It belongs to the adenosylhomocysteinase family. As to quaternary structure, homotetramer. It depends on NAD(+) as a cofactor.

It is found in the cytoplasm. It carries out the reaction S-adenosyl-L-homocysteine + H2O = L-homocysteine + adenosine. It participates in amino-acid biosynthesis; L-homocysteine biosynthesis; L-homocysteine from S-adenosyl-L-homocysteine: step 1/1. Functionally, may play a key role in the regulation of the intracellular concentration of adenosylhomocysteine. This is Adenosylhomocysteinase from Rhodobacter capsulatus (strain ATCC BAA-309 / NBRC 16581 / SB1003).